The following is a 449-amino-acid chain: Probable glycine dehydrogenase (decarboxylating) subunit 1 (449 aa).

Belongs to the GcvP family. N-terminal subunit subfamily. In terms of assembly, the glycine cleavage system is composed of four proteins: P, T, L and H. In this organism, the P 'protein' is a heterodimer of two subunits.

The enzyme catalyses N(6)-[(R)-lipoyl]-L-lysyl-[glycine-cleavage complex H protein] + glycine + H(+) = N(6)-[(R)-S(8)-aminomethyldihydrolipoyl]-L-lysyl-[glycine-cleavage complex H protein] + CO2. Its function is as follows. The glycine cleavage system catalyzes the degradation of glycine. The P protein binds the alpha-amino group of glycine through its pyridoxal phosphate cofactor; CO(2) is released and the remaining methylamine moiety is then transferred to the lipoamide cofactor of the H protein. The protein is Probable glycine dehydrogenase (decarboxylating) subunit 1 of Oceanobacillus iheyensis (strain DSM 14371 / CIP 107618 / JCM 11309 / KCTC 3954 / HTE831).